A 397-amino-acid chain; its full sequence is UDP-galactose translocator (397 aa).

The tract at residues 1–21 is disordered; sequence MAAVGSGGSNAAAGPGAVSAG. The next 10 membrane-spanning stretches (helical) occupy residues 3–23, 37–57, 65–85, 97–117, 140–160, 169–189, 200–220, 238–258, 269–289, and 315–335; these read AVGS…AGSL, YISL…IRYA, FFAT…CLLL, LALF…KLAV, TFQV…VLML, WASL…QAGG, GAGL…GVYF, LGLF…GTAV, PAVW…AVVV, and LFGF…IGAV. Low complexity predominate over residues 9 to 21; the sequence is SNAAAGPGAVSAG. The segment at 355 to 397 is disordered; it reads ASASTSGPCTHQQPPGQPPPPKLSSHRADLSTEPFLPKSVLVK.

It belongs to the nucleotide-sugar transporter family. SLC35A subfamily. In terms of assembly, interacts with SLC35A3; the interaction is reduced in the presence of SLC35A4. Found in a complex with SLC35A3 and SLC35A4.

It is found in the golgi apparatus membrane. It catalyses the reaction UMP(out) + UDP-alpha-D-galactose(in) = UMP(in) + UDP-alpha-D-galactose(out). It carries out the reaction UDP-N-acetyl-alpha-D-galactosamine(in) + UMP(out) = UDP-N-acetyl-alpha-D-galactosamine(out) + UMP(in). The catalysed reaction is UMP(out) + UDP-alpha-D-glucose(in) = UMP(in) + UDP-alpha-D-glucose(out). The enzyme catalyses UMP(out) + UDP-N-acetyl-alpha-D-glucosamine(in) = UMP(in) + UDP-N-acetyl-alpha-D-glucosamine(out). It catalyses the reaction UDP-alpha-D-galactose(in) + AMP(out) = UDP-alpha-D-galactose(out) + AMP(in). It carries out the reaction UDP-alpha-D-galactose(in) + CMP(out) = UDP-alpha-D-galactose(out) + CMP(in). The catalysed reaction is UDP-N-acetyl-alpha-D-galactosamine(out) + UDP-alpha-D-galactose(in) = UDP-N-acetyl-alpha-D-galactosamine(in) + UDP-alpha-D-galactose(out). The enzyme catalyses UDP-N-acetyl-alpha-D-glucosamine(out) + UDP-alpha-D-galactose(in) = UDP-N-acetyl-alpha-D-glucosamine(in) + UDP-alpha-D-galactose(out). It catalyses the reaction UDP-alpha-D-galactose(in) + UDP-alpha-D-glucose(out) = UDP-alpha-D-galactose(out) + UDP-alpha-D-glucose(in). It carries out the reaction UMP(out) + CMP(in) = UMP(in) + CMP(out). The catalysed reaction is UMP(out) + AMP(in) = UMP(in) + AMP(out). Transports uridine diphosphate galactose (UDP-galactose) from the cytosol into the Golgi apparatus, functioning as an antiporter that exchanges UDP-galactose for UMP. It is also able to exchange UDP-galactose for AMP and CMP, and to transport UDP-N-acetylgalactosamine (UDP-GalNAc) and other nucleotide sugars. As a provider of UDP-galactose to galactosyltransferases present in the Golgi apparatus, it is necessary for globotriaosylceramide/globoside (Gb3Cer) synthesis from lactosylceramide. In Canis lupus familiaris (Dog), this protein is UDP-galactose translocator.